The primary structure comprises 1520 residues: Integrator complex subunit 3 homolog (1520 aa).

Disordered stretches follow at residues 1 to 23 (MMNQQQQQQQPPTTSPTQQQQLT), 523 to 671 (QLHS…NSRV), 689 to 801 (VISQ…SPST), 813 to 922 (DEPP…QNIK), 1116 to 1177 (FSNS…NITN), and 1489 to 1520 (QSSNIKNDNNPTLSKHQNSDDDSNPKKRFRKE). 2 stretches are compositionally biased toward low complexity: residues 527-549 (QQQQLQQQQLQQPQQPQQQQQPP) and 557-595 (QPINKQLPLQMSPQQQSQQQLQQQQLQQQLQQQQQQQQP). Over residues 596 to 612 (PQQPPPQQQPQQQPPQQ) the composition is skewed to pro residues. Residues 613–625 (QPQQQPQQQQPQL) show a composition bias toward low complexity. Polar residues predominate over residues 626 to 639 (NISTGNLPNIQQPM). 3 stretches are compositionally biased toward low complexity: residues 642-669 (SPPLSSNTLVSPTSSSSPTSSNLPTNNS), 694-717 (PQSQQTPSLHSSSQSVLQQKSPPL), and 725-735 (QQQPSQQLPSQ). A compositionally biased stretch (polar residues) spans 736–752 (IVKNSPPNLSMTNENIS). A compositionally biased stretch (low complexity) spans 768–789 (SPLINSSNSNITTPNPDSQSQI). Residues 819–828 (SKSSPTQSNI) show a composition bias toward polar residues. The span at 837-882 (PPQTTISSSSPLLQPQTQPQPQTQPQPQTLQQSTTPSLSSSSTPTI) shows a compositional bias: low complexity. Residues 898–918 (QPPPPPPSSQPLQPPPPPPPS) show a composition bias toward pro residues. 2 stretches are compositionally biased toward low complexity: residues 1116 to 1130 (FSNSDDNESTNNNNN) and 1137 to 1177 (QQQQ…NITN). Over residues 1489–1504 (QSSNIKNDNNPTLSKH) the composition is skewed to polar residues.

Belongs to the Integrator subunit 3 family. Component of the Integrator complex. The core complex associates with protein phosphatase 2A subunits, to form the Integrator-PP2A (INTAC) complex. Component of the SOSS complex.

The protein localises to the nucleus. The protein resides in the cytoplasm. Its function is as follows. Component of the integrator complex, a multiprotein complex that terminates RNA polymerase II (Pol II) transcription in the promoter-proximal region of genes. The integrator complex provides a quality checkpoint during transcription elongation by driving premature transcription termination of transcripts that are unfavorably configured for transcriptional elongation: the complex terminates transcription by (1) catalyzing dephosphorylation of the C-terminal domain (CTD) of Pol II subunit polr2a, (2) degrading the exiting nascent RNA transcript via endonuclease activity and (3) promoting the release of Pol II from bound DNA. The integrator complex is also involved in terminating the synthesis of non-coding Pol II transcripts, such as enhancer RNAs (eRNAs), small nuclear RNAs (snRNAs), telomerase RNAs and long non-coding RNAs (lncRNAs). Functionally, component of the SOSS complex, a multiprotein complex that functions downstream of the MRN complex to promote DNA repair and G2/M checkpoint. The SOSS complex associates with single-stranded DNA at DNA lesions and influences diverse endpoints in the cellular DNA damage response including cell-cycle checkpoint activation, recombinational repair and maintenance of genomic stability. The SOSS complex is required for efficient homologous recombination-dependent repair of double-strand breaks (DSBs) and ATM-dependent signaling pathways. In the SOSS complex, it is required for the assembly of the complex and for stabilization of the complex at DNA damage sites. The protein is Integrator complex subunit 3 homolog (ints3) of Dictyostelium discoideum (Social amoeba).